The sequence spans 247 residues: Probable transcriptional regulatory protein MS0710 (247 aa).

This sequence belongs to the TACO1 family.

The protein localises to the cytoplasm. The chain is Probable transcriptional regulatory protein MS0710 from Mannheimia succiniciproducens (strain KCTC 0769BP / MBEL55E).